Here is a 1014-residue protein sequence, read N- to C-terminus: Resistance to glucose repression protein 1 (1014 aa).

Residues methionine 1 to phenylalanine 63 are disordered. Serine 2 is subject to N-acetylserine. Positions glycine 11–valine 34 are enriched in basic and acidic residues. Threonine 73 carries the post-translational modification Phosphothreonine. Serine 75 is modified (phosphoserine). Disordered stretches follow at residues leucine 90 to proline 144 and serine 236 to lysine 270. Residues tyrosine 104–serine 115 show a composition bias toward low complexity. Serine 242 and serine 254 each carry phosphoserine. Over residues aspartate 247 to lysine 260 the composition is skewed to basic and acidic residues. Residues lysine 277–arginine 283 carry the Nuclear localization signal motif. The residue at position 311 (serine 311) is a Phosphoserine. A disordered region spans residues tyrosine 340–asparagine 463. 4 stretches are compositionally biased toward polar residues: residues glutamate 343 to serine 352, serine 361 to asparagine 370, histidine 389 to serine 407, and leucine 415 to glutamate 455. Serine 421 carries the post-translational modification Phosphoserine. At tyrosine 480 the chain carries Phosphotyrosine. Serine 490 is subject to Phosphoserine. Disordered regions lie at residues glutamate 531–histidine 557 and serine 570–arginine 591. 3 positions are modified to phosphoserine: serine 570, serine 572, and serine 576. Residues isoleucine 578–arginine 591 show a composition bias toward polar residues. The Nuclear localization signal signature appears at arginine 595–lysine 599. Residues serine 610, serine 614, and serine 680 each carry the phosphoserine modification. The segment at serine 690–proline 897 is disordered. Positions tyrosine 722 to serine 740 are enriched in low complexity. Over residues serine 741 to histidine 758 the composition is skewed to acidic residues. Composition is skewed to polar residues over residues leucine 770–glycine 802 and arginine 822–serine 833. The Nuclear localization signal signature appears at lysine 873–lysine 879. Positions serine 884–proline 897 are enriched in polar residues. Threonine 896 carries the post-translational modification Phosphothreonine. Position 898 is a phosphoserine (serine 898). Positions lysine 959 to serine 972 are enriched in basic and acidic residues. Positions lysine 959–histidine 982 are disordered. A Phosphoserine modification is found at serine 980.

As to quaternary structure, interacts with SAK1.

It localises to the nucleus. Functionally, involved in RNA processing and negative regulation of glucose repression. Regulates the level of two antigens, P43 and P70. Binds to protein phosphatase type 1. Functions with REG2 and SNF1 protein kinase to regulate growth. Might regulate SNF1 directly or indirectly. This Saccharomyces cerevisiae (strain ATCC 204508 / S288c) (Baker's yeast) protein is Resistance to glucose repression protein 1 (REG1).